Reading from the N-terminus, the 422-residue chain is MDKLLINGGKALHGEVVISGAKNAALPIMAASLLASDHVTISNVPHLKDITTMMELLGQLGAHLIVDEKMNVQVDSSQVNEFVAPYDLVKTMRASILVLGPMLARFGKADVSLPGGCAIGTRPVDLHLKALRAMGADITVKNGYINARCKKGRLQGKRLMFDTVTVTGTENVLMAAVLAEGITTIKNAAREPEVVDLANFLIQMGAKIRGAGTSTIEVEGVESLNGGTYSVMSDRIEAGTYLAAGALTRGQVTVKKVRPDTLLSQLCKFEEAGAELTIGEDWVSLNMHNKRPQAVNIATAPYPAFATDMQAQFMAMNSVAEGSSTIIETIFENRFMHVQELQRMGANIQLNGNTAIVHGVEKLTGAPVMATDLRASASLILAGLVAEGETVVERIYHVDRGYERIEEKLSLLGADIKRVSDR.

22–23 is a binding site for phosphoenolpyruvate; it reads KN. R93 is a UDP-N-acetyl-alpha-D-glucosamine binding site. C117 functions as the Proton donor in the catalytic mechanism. C117 carries the post-translational modification 2-(S-cysteinyl)pyruvic acid O-phosphothioketal. UDP-N-acetyl-alpha-D-glucosamine contacts are provided by residues 122–126, D308, and I330; that span reads RPVDL.

The protein belongs to the EPSP synthase family. MurA subfamily.

The protein localises to the cytoplasm. It carries out the reaction phosphoenolpyruvate + UDP-N-acetyl-alpha-D-glucosamine = UDP-N-acetyl-3-O-(1-carboxyvinyl)-alpha-D-glucosamine + phosphate. Its pathway is cell wall biogenesis; peptidoglycan biosynthesis. In terms of biological role, cell wall formation. Adds enolpyruvyl to UDP-N-acetylglucosamine. The chain is UDP-N-acetylglucosamine 1-carboxyvinyltransferase 2 from Legionella pneumophila (strain Lens).